The primary structure comprises 287 residues: tRNA selenocysteine 1-associated protein 1 (287 aa).

2 RRM domains span residues 3–86 (ASLW…YATY) and 96–175 (YSLF…VAIP).

Belongs to the RRM TRSPAP family. As to quaternary structure, component of the tRNA(Sec) complex composed at least of EEFSEC, SECISBP2, SEPHS1, SEPSECS, TRNAU1AP and tRNA(Sec). Found in a complex with tRNA(Sec). Interacts with SEPSECS. Associates with mRNP and/or polysomes. Found in a complex with EEFSEC, SECISBP2, TRNAU1AP and tRNA(Sec).

Its subcellular location is the nucleus. The protein resides in the cytoplasm. Its function is as follows. Involved in the early steps of selenocysteine biosynthesis and tRNA(Sec) charging to the later steps resulting in the cotranslational incorporation of selenocysteine into selenoproteins. Stabilizes the SECISBP2, EEFSEC and tRNA(Sec) complex. May be involved in the methylation of tRNA(Sec). Enhances efficiency of selenoproteins synthesis. This chain is tRNA selenocysteine 1-associated protein 1 (TRNAU1AP), found in Homo sapiens (Human).